A 629-amino-acid polypeptide reads, in one-letter code: MAISPRSDATFSSQKSTPSESPRTKKFPLTEEEIFYMNCRAAYLTVFKSSLENIISKDQLYLALQHAGRNPSQKTINKYWTPQTAKLNFDDFCIILRKEKPTSKAELLKSFKQLDVNDDGCILHTDLYKFLTKRGEKMTREEVNAIINLADVNADGKFDYIKFCKLYMTTNEQCLKTTLEKLEVDSKLMRHQFGNHIEGSPERDPSPVPKPSPKITRKTDPETFLNKGDTRSSLLSATRKFKTSVSFTVTMGANGNRNSKLMEPNLIKDWQHMQSKGCFFLEEDGEIISHQYRMQIAQRSMVYLTIKPLNLSQVEGKPSPWLSVDTALYILKENESQANLQLVCFTELRNREVFGWTGELGPGIYWLIPSTTGCRLRKKIKPVTDEAQLVYRDETGELFLTKEFKSTLSDIFEVIDLDGNGLLSLEEYNFFELRTSGEKCDEDAWAVCRENFDTKRNELTRQGFMDLNLMEANDREGDPCDLWVTLHSMGYNKALELTEACPFVIDIYAEKCKPKIKAVHMEACSGQLEKAICKSVLSNGDAKVMDGYENIIVHTYSCDTWITSVIENKSDEKVIIHISNELSKNCINNRGLNIFAVEVGPKSTMVCQHVMPLNERQEWIYYCIYSLIS.

The disordered stretch occupies residues 1–25; the sequence is MAISPRSDATFSSQKSTPSESPRTK. Residues 7-21 show a composition bias toward polar residues; it reads SDATFSSQKSTPSES. 2 consecutive EF-hand domains span residues 102-137 and 138-173; these read TSKAELLKSFKQLDVNDDGCILHTDLYKFLTKRGEK and MTREEVNAIINLADVNADGKFDYIKFCKLYMTTNEQ. Residues 195-229 are disordered; that stretch reads NHIEGSPERDPSPVPKPSPKITRKTDPETFLNKGD. Residues Ser-200 and Ser-212 each carry the phosphoserine modification. The EF-hand 3 domain maps to 403-438; sequence EFKSTLSDIFEVIDLDGNGLLSLEEYNFFELRTSGE. Positions 416, 418, 420, and 427 each coordinate Ca(2+).

Component of the EvC complex composed of EFCAB7, IQCE, EVC2 and EVC; built from two subcomplexes, EVC2:EVC and EFCAB7:IQCE. Interacts (via EF-hand 1 and 2) with IQCE (via N-terminus); this interaction anchors the EVC-EVC2 complex in a signaling microdomain at the base of cilia and stimulates the Hedgehog (Hh) pathway. Interacts with EVC2 (via N-terminal end). Interacts with EVC.

It is found in the cell projection. Its subcellular location is the cilium membrane. Component of the EvC complex that positively regulates ciliary Hedgehog (Hh) signaling. Required for the localization of the EVC2:EVC subcomplex at the base of primary cilia. The chain is EF-hand calcium-binding domain-containing protein 7 (EFCAB7) from Homo sapiens (Human).